Consider the following 666-residue polypeptide: tRNA 5-methylaminomethyl-2-thiouridine biosynthesis bifunctional protein MnmC (666 aa).

The segment at 1-245 is tRNA (mnm(5)s(2)U34)-methyltransferase; that stretch reads MKQYAIQPAT…KREMLCGVME (245 aa). The interval 270–666 is FAD-dependent cmnm(5)s(2)U34 oxidoreductase; the sequence is IGGGIASALL…RKLLKGKAVK (397 aa).

In the N-terminal section; belongs to the methyltransferase superfamily. tRNA (mnm(5)s(2)U34)-methyltransferase family. The protein in the C-terminal section; belongs to the DAO family. The cofactor is FAD.

Its subcellular location is the cytoplasm. It catalyses the reaction 5-aminomethyl-2-thiouridine(34) in tRNA + S-adenosyl-L-methionine = 5-methylaminomethyl-2-thiouridine(34) in tRNA + S-adenosyl-L-homocysteine + H(+). In terms of biological role, catalyzes the last two steps in the biosynthesis of 5-methylaminomethyl-2-thiouridine (mnm(5)s(2)U) at the wobble position (U34) in tRNA. Catalyzes the FAD-dependent demodification of cmnm(5)s(2)U34 to nm(5)s(2)U34, followed by the transfer of a methyl group from S-adenosyl-L-methionine to nm(5)s(2)U34, to form mnm(5)s(2)U34. This Salmonella typhi protein is tRNA 5-methylaminomethyl-2-thiouridine biosynthesis bifunctional protein MnmC.